Consider the following 344-residue polypeptide: Putative 2-hydroxyacid dehydrogenase YoaD (344 aa).

NAD(+) is bound at residue Asp-193. The active site involves Arg-251. Asp-275 provides a ligand contact to NAD(+). Glu-280 is a catalytic residue. His-300 (proton donor) is an active-site residue.

Belongs to the D-isomer specific 2-hydroxyacid dehydrogenase family.

In Bacillus subtilis (strain 168), this protein is Putative 2-hydroxyacid dehydrogenase YoaD (yoaD).